The primary structure comprises 745 residues: Arf-GAP with coiled-coil, ANK repeat and PH domain-containing protein 1 (745 aa).

The 226-residue stretch at 1-226 folds into the BAR domain; the sequence is MTVKLDFEEC…RKELGGQLHQ (226 aa). The required for formation of endosomal tubules when overexpressed with PIP5K1C stretch occupies residues 1 to 382; it reads MTVKLDFEEC…RGLGQGSGHL (382 aa). Residues 265 to 360 enclose the PH domain; it reads GLVMEGHLFK…WVSAVQSSIA (96 aa). One can recognise an Arf-GAP domain in the interval 405–527; that stretch reads GHVAAQVQSV…KFLTKLPEIR (123 aa). The interval 405–745 is required for interaction with GULP1; the sequence is GHVAAQVQSV…SRRSHDLHTL (341 aa). Residues 420–443 form a C4-type zinc finger; that stretch reads CCDCREPAPEWASINLGVTLCIQC. Tyr485 bears the 3'-nitrotyrosine mark. The segment at 525 to 567 is prevents interaction with ITGB1 when S-554 is not phosphorylated; the sequence is EIRGRRGGRGPPRGHPPVPPKPGLIRPKPGSFRSKPEPPSEDL. Residues 525–569 form a disordered region; that stretch reads EIRGRRGGRGPPRGHPPVPPKPGLIRPKPGSFRSKPEPPSEDLQS. Residues 537 to 546 show a composition bias toward pro residues; the sequence is RGHPPVPPKP. Ser555 carries the phosphoserine; by PKB modification. ANK repeat units lie at residues 607–640, 644–673, and 677–707; these read ENATPLIQATAAVRVLNSLLACEFLLQNGANVNQ, QGRGPLHHATILGHTGLACLFLKRGADLGV, and EGRDPLTIAVETANADIVTLLRLAKMREADA.

As to quaternary structure, banana-shaped homodimer laterally assembling into tetramers, the tetramers further pack helically onto the membrane. Interacts with GTP-bound ARF6. Interacts with third cytoplasmic loop of SLC2A4/GLUT4. Interacts with CLTC. Interacts with GULP1. Forms a complex with GDP-bound ARF6 and GULP1. Interacts with ITGB1; required for ITGB1 recycling. Phosphorylation at Ser-555 by PKB is required for interaction with ITGB1, export of ITGB1 from recycling endosomes to the cell surface and ITGB1-dependent cell migration.

Its subcellular location is the recycling endosome membrane. Its activity is regulated as follows. GAP activity stimulated by phosphatidylinositol 4,5-bisphosphate (PIP2) and phosphatidic acid. GTPase-activating protein (GAP) for ADP ribosylation factor 6 (ARF6) required for clathrin-dependent export of proteins from recycling endosomes to trans-Golgi network and cell surface. Required for regulated export of ITGB1 from recycling endosomes to the cell surface and ITGB1-dependent cell migration. This is Arf-GAP with coiled-coil, ANK repeat and PH domain-containing protein 1 (ACAP1) from Bos taurus (Bovine).